A 353-amino-acid chain; its full sequence is GTPase Obg (353 aa).

One can recognise an Obg domain in the interval methionine 1 to leucine 159. An OBG-type G domain is found at alanine 160–tyrosine 333. GTP-binding positions include glycine 166–serine 173, phenylalanine 191–valine 195, aspartate 212–glycine 215, threonine 283–aspartate 286, and serine 314–valine 316. Serine 173 and threonine 193 together coordinate Mg(2+).

Belongs to the TRAFAC class OBG-HflX-like GTPase superfamily. OBG GTPase family. Monomer. Mg(2+) is required as a cofactor.

It localises to the cytoplasm. Its function is as follows. An essential GTPase which binds GTP, GDP and possibly (p)ppGpp with moderate affinity, with high nucleotide exchange rates and a fairly low GTP hydrolysis rate. Plays a role in control of the cell cycle, stress response, ribosome biogenesis and in those bacteria that undergo differentiation, in morphogenesis control. The polypeptide is GTPase Obg (Anaeromyxobacter sp. (strain Fw109-5)).